Here is a 131-residue protein sequence, read N- to C-terminus: Olfactory receptor-like protein COR9 (131 aa).

Topologically, residues Val-1 to Arg-16 are cytoplasmic. The helical transmembrane segment at Val-17–Leu-41 threads the bilayer. Residues Gly-42–Val-82 are Extracellular-facing. An N-linked (GlcNAc...) asparagine glycan is attached at Asn-72. A helical transmembrane segment spans residues Ile-83 to Leu-103. Residues Lys-104 to His-116 are Cytoplasmic-facing. The chain crosses the membrane as a helical span at residues Thr-117–Ser-131.

Belongs to the G-protein coupled receptor 1 family.

It is found in the cell membrane. Odorant receptor. This Gallus gallus (Chicken) protein is Olfactory receptor-like protein COR9 (COR9).